A 217-amino-acid polypeptide reads, in one-letter code: Ras-like protein (217 aa).

17-24 contributes to the GTP binding site; the sequence is GGGGVGKS. An Effector region motif is present at residues 39 to 47; it reads YDPTIEDSY. GTP contacts are provided by residues 64–68 and 123–126; these read DTAGQ and NKCD. The segment at 181–200 is disordered; it reads TGRMMTGGGGGGPPGTYAGK. The span at 185 to 194 shows a compositional bias: gly residues; that stretch reads MTGGGGGGPP. Residues Cys-210 and Cys-211 are each lipidated (S-palmitoyl cysteine). Position 214 is a cysteine methyl ester (Cys-214). Cys-214 carries S-geranylgeranyl cysteine lipidation. The propeptide at 215 to 217 is removed in mature form; that stretch reads VVL.

The protein belongs to the small GTPase superfamily. Ras family.

It is found in the cell membrane. The catalysed reaction is GTP + H2O = GDP + phosphate + H(+). With respect to regulation, alternates between an inactive form bound to GDP and an active form bound to GTP. Activated by a guanine nucleotide-exchange factor (GEF) and inactivated by a GTPase-activating protein (GAP). The sequence is that of Ras-like protein from Lentinula edodes (Shiitake mushroom).